The following is a 374-amino-acid chain: Chaperone protein DnaJ (374 aa).

The J domain maps to 5–70 (DYYEILEIER…GKRQLYDRYG (66 aa)). The CR-type zinc finger occupies 136–213 (GCKKEIKIRY…CNGKGHENKE (78 aa)). Zn(2+) contacts are provided by Cys149, Cys152, Cys165, Cys168, Cys187, Cys190, Cys201, and Cys204. 4 CXXCXGXG motif repeats span residues 149-156 (CPDCKGTG), 165-172 (CPDCGGRG), 187-194 (CPKCGGSG), and 201-208 (CPKCNGKG).

Belongs to the DnaJ family. As to quaternary structure, homodimer. Zn(2+) serves as cofactor.

Its subcellular location is the cytoplasm. Functionally, participates actively in the response to hyperosmotic and heat shock by preventing the aggregation of stress-denatured proteins and by disaggregating proteins, also in an autonomous, DnaK-independent fashion. Unfolded proteins bind initially to DnaJ; upon interaction with the DnaJ-bound protein, DnaK hydrolyzes its bound ATP, resulting in the formation of a stable complex. GrpE releases ADP from DnaK; ATP binding to DnaK triggers the release of the substrate protein, thus completing the reaction cycle. Several rounds of ATP-dependent interactions between DnaJ, DnaK and GrpE are required for fully efficient folding. Also involved, together with DnaK and GrpE, in the DNA replication of plasmids through activation of initiation proteins. The protein is Chaperone protein DnaJ of Wolinella succinogenes (strain ATCC 29543 / DSM 1740 / CCUG 13145 / JCM 31913 / LMG 7466 / NCTC 11488 / FDC 602W) (Vibrio succinogenes).